The sequence spans 107 residues: CRISPR-associated endoribonuclease Cas2 (107 aa).

Asp6 serves as a coordination point for Mg(2+).

The protein belongs to the CRISPR-associated endoribonuclease Cas2 protein family. As to quaternary structure, homodimer, forms a heterotetramer with a Cas1 homodimer. It depends on Mg(2+) as a cofactor.

In terms of biological role, CRISPR (clustered regularly interspaced short palindromic repeat), is an adaptive immune system that provides protection against mobile genetic elements (viruses, transposable elements and conjugative plasmids). CRISPR clusters contain sequences complementary to antecedent mobile elements and target invading nucleic acids. CRISPR clusters are transcribed and processed into CRISPR RNA (crRNA). Functions as a ssRNA-specific endoribonuclease. Involved in the integration of spacer DNA into the CRISPR cassette. In Streptococcus mutans serotype c (strain NN2025), this protein is CRISPR-associated endoribonuclease Cas2.